The primary structure comprises 303 residues: MGDVDKWIEDVKKCKYLPENELKKLCEMVCDILLEETNILPVSTPVTVCGDIHGQFYDLEQLFRTGGQVPHTNYIFMGDFVDRGYYSLETFTRLLTLKARYPSRITLLRGNHETRQITKVYGFFDECFSKYGNANGWKYCCKVFDLLTIAAIIDEEVLCVHGGLSPEIITLDQIRTIDRNGEIPYKGAFCDLVWSDPEDMEYWGQSPRGAGWLFGHNVTKDFMAINNLNLICRAHQLVNEGIKYMFDGKLVTVWSAPNYCYRCGNVAAILSFETAEKRQTKIFLAVPDAERVIPKQNTTPYFL.

Positions 51, 53, 79, and 111 each coordinate Mn(2+). His-112 functions as the Proton donor in the catalytic mechanism. 2 residues coordinate Mn(2+): His-161 and His-235.

This sequence belongs to the PPP phosphatase family. PP-6 (PP-V) subfamily. Requires Mn(2+) as cofactor.

It localises to the cytoplasm. It carries out the reaction O-phospho-L-seryl-[protein] + H2O = L-seryl-[protein] + phosphate. The catalysed reaction is O-phospho-L-threonyl-[protein] + H2O = L-threonyl-[protein] + phosphate. In terms of biological role, may be involved in controlling cellularization or in regulating transcription of the genes involved in this process. The chain is Serine/threonine-protein phosphatase 6 catalytic subunit (PpV) from Drosophila melanogaster (Fruit fly).